We begin with the raw amino-acid sequence, 351 residues long: Apolipoprotein L4 (351 aa).

The N-terminal stretch at 1-21 (MEGAALLKIFVVCIWVQQNHP) is a signal peptide.

The protein belongs to the apolipoprotein L family. As to expression, widely expressed; the highest levels are in spinal cord, placenta, adrenal gland; also detected in spleen, bone marrow, uterus, trachea, mammary gland and testis; levels are low in brain, heart and pancreas.

It is found in the secreted. Functionally, may play a role in lipid exchange and transport throughout the body. May participate in reverse cholesterol transport from peripheral cells to the liver. The polypeptide is Apolipoprotein L4 (APOL4) (Homo sapiens (Human)).